Reading from the N-terminus, the 134-residue chain is MKPSERRKARRLAVQAIYSWQLSGNNIADVEHEFLTEQSLDGVDVAYFRELFSGVATKKPQLDELIIPHLERPIDEVSPVEKAIVRLATYELTFRKDVPYKVAINEAIELAKAFGADESHKFVNGLLDKLVARK.

The protein belongs to the NusB family.

In terms of biological role, involved in transcription antitermination. Required for transcription of ribosomal RNA (rRNA) genes. Binds specifically to the boxA antiterminator sequence of the ribosomal RNA (rrn) operons. This is Transcription antitermination protein NusB from Shewanella sp. (strain W3-18-1).